We begin with the raw amino-acid sequence, 511 residues long: 2'-acyl-2-O-sulfo-trehalose (hydroxy)phthioceranyltransferase PapA1 (511 aa).

The protein belongs to the PapA acyltransferase family.

It catalyses the reaction a (hydroxy)phthioceranyl-[(hydroxy)phthioceranic acid synthase] + 2'-palmitoyl/stearoyl-2-O-sulfo-alpha,alpha-trehalose = a 3'-(hydroxy)phthioceranyl-2'-palmitoyl/stearoyl-2-O-sulfo-alpha,alpha-trehalose + holo-[(hydroxy)phthioceranic acid synthase].. In terms of biological role, catalyzes the acylation of trehalose-2-sulfate-2'-palmitate (SL659) by adding the (hydroxy)phthioceranoyl group at the 3'-position to yield the diacylated intermediate 2-palmitoyl-3-(C43)-phthioceranyl-alpha, alpha'-D-trehalose-2'-sulfate (SL1278). This is 2'-acyl-2-O-sulfo-trehalose (hydroxy)phthioceranyltransferase PapA1 (papA1) from Mycobacterium bovis (strain BCG / Pasteur 1173P2).